Here is a 210-residue protein sequence, read N- to C-terminus: Probable septum site-determining protein MinC (210 aa).

This sequence belongs to the MinC family. In terms of assembly, interacts with MinD and FtsZ.

In terms of biological role, cell division inhibitor that blocks the formation of polar Z ring septums. Rapidly oscillates between the poles of the cell to destabilize FtsZ filaments that have formed before they mature into polar Z rings. Prevents FtsZ polymerization. The polypeptide is Probable septum site-determining protein MinC (Thermotoga petrophila (strain ATCC BAA-488 / DSM 13995 / JCM 10881 / RKU-1)).